Consider the following 421-residue polypeptide: Testin (421 aa).

The 108-residue stretch at 92-199 (MILTNPVAAR…GDVKLPCELD (108 aa)) folds into the PET domain. A disordered region spans residues 134 to 164 (KQPVAGSEGAQYRKKQLAKQLPAHDQDPSKC). Residues 155 to 164 (PAHDQDPSKC) show a composition bias toward basic and acidic residues. LIM zinc-binding domains follow at residues 234–297 (YSCY…CDSE), 299–359 (PRCA…NHAV), and 362–421 (QGCH…KMMS).

The protein belongs to the prickle / espinas / testin family. In terms of assembly, interacts via LIM domain 1 with ZYX. Interacts (via LIM domain 3) with ENAH and VASP. Interacts with ALKBH4, talin, actin, alpha-actinin, GRIP1 and PXN. Interacts (via LIM domain 2) with ACTL7A (via N-terminus). Heterodimer with ACTL7A; the heterodimer interacts with ENAH to form a heterotrimer.

The protein resides in the cytoplasm. It localises to the cell junction. Its subcellular location is the focal adhesion. Scaffold protein that may play a role in cell adhesion, cell spreading and in the reorganization of the actin cytoskeleton. Plays a role in the regulation of cell proliferation. May act as a tumor suppressor. In Eulemur macaco macaco (Black lemur), this protein is Testin (TES).